The following is a 312-amino-acid chain: Putative S-adenosyl-L-methionine-dependent methyltransferase Mkms_0097 (312 aa).

S-adenosyl-L-methionine-binding positions include Asp-134 and 163–164 (DL).

This sequence belongs to the UPF0677 family.

In terms of biological role, exhibits S-adenosyl-L-methionine-dependent methyltransferase activity. In Mycobacterium sp. (strain KMS), this protein is Putative S-adenosyl-L-methionine-dependent methyltransferase Mkms_0097.